The primary structure comprises 225 residues: Enolase-phosphatase E1 (225 aa).

This sequence belongs to the HAD-like hydrolase superfamily. MasA/MtnC family. As to quaternary structure, monomer. Mg(2+) serves as cofactor.

The enzyme catalyses 5-methylsulfanyl-2,3-dioxopentyl phosphate + H2O = 1,2-dihydroxy-5-(methylsulfanyl)pent-1-en-3-one + phosphate. Its pathway is amino-acid biosynthesis; L-methionine biosynthesis via salvage pathway; L-methionine from S-methyl-5-thio-alpha-D-ribose 1-phosphate: step 3/6. The protein operates within amino-acid biosynthesis; L-methionine biosynthesis via salvage pathway; L-methionine from S-methyl-5-thio-alpha-D-ribose 1-phosphate: step 4/6. Its function is as follows. Bifunctional enzyme that catalyzes the enolization of 2,3-diketo-5-methylthiopentyl-1-phosphate (DK-MTP-1-P) into the intermediate 2-hydroxy-3-keto-5-methylthiopentenyl-1-phosphate (HK-MTPenyl-1-P), which is then dephosphorylated to form the acireductone 1,2-dihydroxy-3-keto-5-methylthiopentene (DHK-MTPene). The polypeptide is Enolase-phosphatase E1 (Shewanella loihica (strain ATCC BAA-1088 / PV-4)).